A 268-amino-acid polypeptide reads, in one-letter code: Glycine/sarcosine N-methyltransferase (268 aa).

S-adenosyl-L-methionine contacts are provided by residues Tyr-26, Trp-34, Arg-43, Ala-67, Asp-88, 114–115, and Leu-132; that span reads DW. Asn-134, Arg-167, and Tyr-206 together coordinate substrate.

It belongs to the class I-like SAM-binding methyltransferase superfamily. Glycine N-methyltransferase family. In terms of assembly, monomer.

It catalyses the reaction glycine + 2 S-adenosyl-L-methionine = N,N-dimethylglycine + 2 S-adenosyl-L-homocysteine + 2 H(+). It carries out the reaction glycine + S-adenosyl-L-methionine = sarcosine + S-adenosyl-L-homocysteine + H(+). The catalysed reaction is sarcosine + S-adenosyl-L-methionine = N,N-dimethylglycine + S-adenosyl-L-homocysteine + H(+). It participates in amine and polyamine biosynthesis; betaine biosynthesis via glycine pathway; betaine from glycine: step 1/3. Its pathway is amine and polyamine biosynthesis; betaine biosynthesis via glycine pathway; betaine from glycine: step 2/3. P-chloromercuribenzoic acid inhibits more than 95% of the GSMT activities on glycine and sarcosine, and S-adenosylhomocysteine (AdoHcy) inhibits completely GSMT activities. In terms of biological role, catalyzes the methylation of glycine and sarcosine to sarcosine and dimethylglycine, respectively, with S-adenosylmethionine (AdoMet) acting as the methyl donor. It has strict specificity for glycine and sarcosine as the methyl group acceptors. This is Glycine/sarcosine N-methyltransferase from Halorhodospira halochloris (Ectothiorhodospira halochloris).